We begin with the raw amino-acid sequence, 354 residues long: Thiamine thiazole synthase 2, chloroplastic (354 aa).

Residues 1 to 44 (MATTAASSLLKSSFAGSRLPSATRTTTPSSVAVATPRAGGGPIR) constitute a chloroplast transit peptide. The segment at 17–49 (SRLPSATRTTTPSSVAVATPRAGGGPIRASISS) is disordered. Residues 20 to 32 (PSATRTTTPSSVA) show a composition bias toward polar residues. Substrate-binding positions include alanine 97, 117 to 118 (EQ), glycine 125, and valine 190. Cysteine 219 carries the 2,3-didehydroalanine (Cys) modification. Substrate-binding positions include aspartate 221, histidine 236, methionine 288, and 298-300 (RMG).

Belongs to the THI4 family. Homooctamer. It depends on Fe cation as a cofactor. During the catalytic reaction, a sulfide is transferred from Cys-219 to a reaction intermediate, generating a dehydroalanine residue. In terms of tissue distribution, highest expression in developing embryos and green leaves and a very low level expression seen in endosperm, roots, etiolated shoots and immature ears.

It is found in the plastid. The protein resides in the chloroplast. It catalyses the reaction [ADP-thiazole synthase]-L-cysteine + glycine + NAD(+) = [ADP-thiazole synthase]-dehydroalanine + ADP-5-ethyl-4-methylthiazole-2-carboxylate + nicotinamide + 3 H2O + 2 H(+). In terms of biological role, involved in biosynthesis of the thiamine precursor thiazole. Catalyzes the conversion of NAD and glycine to adenosine diphosphate 5-(2-hydroxyethyl)-4-methylthiazole-2-carboxylic acid (ADT), an adenylated thiazole intermediate. The reaction includes an iron-dependent sulfide transfer from a conserved cysteine residue of the protein to a thiazole intermediate. The enzyme can only undergo a single turnover, which suggests it is a suicide enzyme. May have additional roles in adaptation to various stress conditions and in DNA damage tolerance. This Zea mays (Maize) protein is Thiamine thiazole synthase 2, chloroplastic.